We begin with the raw amino-acid sequence, 173 residues long: Large ribosomal subunit protein uL10 (173 aa).

It belongs to the universal ribosomal protein uL10 family. Part of the ribosomal stalk of the 50S ribosomal subunit. The N-terminus interacts with L11 and the large rRNA to form the base of the stalk. The C-terminus forms an elongated spine to which L12 dimers bind in a sequential fashion forming a multimeric L10(L12)X complex.

Its function is as follows. Forms part of the ribosomal stalk, playing a central role in the interaction of the ribosome with GTP-bound translation factors. In Bifidobacterium longum (strain DJO10A), this protein is Large ribosomal subunit protein uL10.